A 2100-amino-acid chain; its full sequence is Autophagy-related protein 2 (2100 aa).

7 disordered regions span residues 101-129 (LPDK…HSVL), 288-363 (STVH…DSDD), 410-492 (IFPK…AVSQ), 512-588 (MSAM…HNSP), 674-694 (LPIS…GLND), 1474-1499 (PSHG…SASA), and 1969-1996 (DFLN…VDEG). The span at 300–320 (RPRSPQPSSSGSDSCGDMSRS) shows a compositional bias: low complexity. The span at 335-346 (VDSHGDESRHLE) shows a compositional bias: basic and acidic residues. Residues 462–485 (DSATSARGKTPDCQTEQESPSTSK) show a composition bias toward polar residues. A compositionally biased stretch (low complexity) spans 512–522 (MSAMSQSSTTS). Composition is skewed to basic and acidic residues over residues 535–546 (KRIDTSDPDQKE) and 555–565 (TEAKGASHDFD). The span at 1973 to 1985 (SPRGSPSRPSTSD) shows a compositional bias: low complexity. The segment covering 1986–1996 (GRWDDNGVDEG) has biased composition (basic and acidic residues).

Belongs to the ATG2 family.

The protein localises to the preautophagosomal structure membrane. The protein resides in the endoplasmic reticulum membrane. The enzyme catalyses a 1,2-diacyl-sn-glycero-3-phosphocholine(in) = a 1,2-diacyl-sn-glycero-3-phosphocholine(out). It carries out the reaction a 1,2-diacyl-sn-glycero-3-phospho-L-serine(in) = a 1,2-diacyl-sn-glycero-3-phospho-L-serine(out). The catalysed reaction is a 1,2-diacyl-sn-glycero-3-phosphoethanolamine(in) = a 1,2-diacyl-sn-glycero-3-phosphoethanolamine(out). Lipid transfer protein required for autophagosome completion and peroxisome degradation. Tethers the edge of the isolation membrane (IM) to the endoplasmic reticulum (ER) and mediates direct lipid transfer from ER to IM for IM expansion. ATG2 binds to the ER exit site (ERES), which is the membrane source for autophagosome formation, using basic residues in its N-terminal region (NR) and to the expanding edge of the IM through its C-terminal region. The latter binding is assisted by an ATG18-PtdIns3P interaction. ATG2 then extracts phospholipids from the membrane source using its NR and transfers them to ATG9 to the IM through its predicted beta-sheet-rich structure for membrane expansion. This Coccidioides immitis (strain RS) (Valley fever fungus) protein is Autophagy-related protein 2 (ATG2).